The following is a 311-amino-acid chain: Olfactory receptor 4S2 (311 aa).

Over methionine 1 to lysine 23 the chain is Extracellular. N-linked (GlcNAc...) asparagine glycosylation occurs at asparagine 6. The helical transmembrane segment at valine 24 to valine 47 threads the bilayer. Residues cysteine 48–serine 55 lie on the Cytoplasmic side of the membrane. A helical membrane pass occupies residues proline 56–proline 77. At lysine 78 to glutamine 98 the chain is on the extracellular side. A disulfide bond links cysteine 95 and cysteine 187. A helical transmembrane segment spans residues leucine 99–tyrosine 118. Over aspartate 119–glutamate 137 the chain is Cytoplasmic. The chain crosses the membrane as a helical span at residues threonine 138–isoleucine 156. The Extracellular portion of the chain corresponds to glutamine 157 to valine 193. A helical membrane pass occupies residues glycine 194 to serine 217. At isoleucine 218–lysine 233 the chain is on the cytoplasmic side. Residues alanine 234 to tyrosine 256 form a helical membrane-spanning segment. Over methionine 257–lysine 267 the chain is Extracellular. The chain crosses the membrane as a helical span at residues methionine 268–leucine 287. Residues arginine 288 to lysine 311 are Cytoplasmic-facing.

The protein belongs to the G-protein coupled receptor 1 family.

The protein resides in the cell membrane. In terms of biological role, odorant receptor. The protein is Olfactory receptor 4S2 (OR4S2) of Homo sapiens (Human).